The primary structure comprises 305 residues: Chromatin modification-related protein png2 (305 aa).

The tract at residues 135–239 (TVTPQTSERR…PLVKHDTLDS (105 aa)) is disordered. A compositionally biased stretch (low complexity) spans 153-167 (NQHSQQYSSQERSSS). 2 stretches are compositionally biased toward polar residues: residues 168-183 (YNNFEDASSPQSSYHT) and 195-210 (KSSSPPLSSTKHAPQS). A Phosphotyrosine modification is found at tyrosine 181. The residue at position 183 (threonine 183) is a Phosphothreonine. Phosphoserine is present on residues serine 197 and serine 198. The span at 211–223 (TERRPVRRSESRL) shows a compositional bias: basic and acidic residues. The PHD-type zinc finger occupies 248 to 297 (QLYCYCQQVSYGQMIGCDNENCKREWFHLPCVGLVEPPKGIWYCKECEEL). The Zn(2+) site is built by cysteine 251, cysteine 253, cysteine 264, cysteine 269, histidine 275, cysteine 278, cysteine 291, and cysteine 294.

The protein belongs to the ING family. As to quaternary structure, interacts with H3K4me3 and to a lesser extent with H3K4me2. Component of the clr6 histone deacetylase complex I'composed of at least clr6, png2, prw1, pst1 and sds3.

Its subcellular location is the cytoplasm. The protein resides in the nucleus. Its function is as follows. Component of the clr6 histone deacetylase complex I' responsible for the deacetylation of lysine residues on the N-terminal part of the core histones (H2A, H2B, H3 and H4). Histone deacetylation gives a tag for epigenetic repression and plays an important role in transcriptional regulation, cell cycle progression and developmental events. Has a role in silencing of mating type genes. This is Chromatin modification-related protein png2 (png2) from Schizosaccharomyces pombe (strain 972 / ATCC 24843) (Fission yeast).